Here is a 1212-residue protein sequence, read N- to C-terminus: Myosin-1 (1212 aa).

The interval 1–35 is disordered; the sequence is MGITRRGKDKAAAGQAVAGGASGGRARPKKATFET. Residues 41-715 form the Myosin motor domain; it reads VGVSDLTLLS…TLFALEHMRD (675 aa). 134–141 serves as a coordination point for ATP; sequence GESGAGKT. The actin-binding stretch occupies residues 405–487; that stretch reads SVGILDIYGF…PGVFSALKDA (83 aa). 2 consecutive IQ domains span residues 719–739 and 740–765; these read HNMA…RAES and ATRI…HGHR. The TH1 domain occupies 773 to 962; the sequence is RRRMSILGSR…AVHTQQGEPP (190 aa). Disordered regions lie at residues 947–1064 and 1115–1212; these read DFYK…APPA and PAAY…DDDW. Residues 954 to 966 are compositionally biased toward polar residues; that stretch reads VHTQQGEPPNSVS. Composition is skewed to low complexity over residues 987-998 and 1008-1052; these read RPGGPNGRPARG and PGGA…ASVR. The segment covering 1053–1062 has biased composition (pro residues); sequence APPPPPPAAP. Positions 1065–1124 constitute an SH3 domain; that stretch reads KAKIMAKVLYDFAGQKENEMSIKEGDLIEIVQKENNGWWLAKSGNQQAWVPAAYVEEQKQ. Positions 1125–1140 are enriched in pro residues; it reads APPPVAASRPPPPAPP. Over residues 1171 to 1190 the composition is skewed to polar residues; sequence MSLNGSDGSRSNTPTPSLGN.

The protein belongs to the TRAFAC class myosin-kinesin ATPase superfamily. Myosin family.

Its subcellular location is the cytoplasm. It is found in the cytoskeleton. The protein localises to the actin patch. Type-I myosin implicated in the organization of the actin cytoskeleton. Required for proper actin cytoskeleton polarization. At the cell cortex, assembles in patch-like structures together with proteins from the actin-polymerizing machinery and promotes actin assembly. Functions as actin nucleation-promoting factor (NPF) for the Arp2/3 complex. This chain is Myosin-1 (MYO1), found in Pyricularia oryzae (strain 70-15 / ATCC MYA-4617 / FGSC 8958) (Rice blast fungus).